The sequence spans 67 residues: Large ribosomal subunit protein bL35 (67 aa).

It belongs to the bacterial ribosomal protein bL35 family.

The sequence is that of Large ribosomal subunit protein bL35 from Rhizorhabdus wittichii (strain DSM 6014 / CCUG 31198 / JCM 15750 / NBRC 105917 / EY 4224 / RW1) (Sphingomonas wittichii).